The sequence spans 234 residues: 7-cyano-7-deazaguanine synthase (234 aa).

Residue 13-23 (LSGGQDSTTCL) participates in ATP binding. Zn(2+) is bound by residues Cys-193, Cys-201, Cys-204, and Cys-207.

It belongs to the QueC family. The cofactor is Zn(2+).

It carries out the reaction 7-carboxy-7-deazaguanine + NH4(+) + ATP = 7-cyano-7-deazaguanine + ADP + phosphate + H2O + H(+). It functions in the pathway purine metabolism; 7-cyano-7-deazaguanine biosynthesis. In terms of biological role, catalyzes the ATP-dependent conversion of 7-carboxy-7-deazaguanine (CDG) to 7-cyano-7-deazaguanine (preQ(0)). The polypeptide is 7-cyano-7-deazaguanine synthase (Chromobacterium violaceum (strain ATCC 12472 / DSM 30191 / JCM 1249 / CCUG 213 / NBRC 12614 / NCIMB 9131 / NCTC 9757 / MK)).